We begin with the raw amino-acid sequence, 665 residues long: Fructose-1,6-bisphosphatase class 3 (665 aa).

It belongs to the FBPase class 3 family. Mn(2+) is required as a cofactor.

It carries out the reaction beta-D-fructose 1,6-bisphosphate + H2O = beta-D-fructose 6-phosphate + phosphate. Its pathway is carbohydrate biosynthesis; gluconeogenesis. The protein is Fructose-1,6-bisphosphatase class 3 of Clostridium novyi (strain NT).